The following is a 446-amino-acid chain: Iron-sulfur cluster assembly SufBD family protein PH1385 (446 aa).

The protein belongs to the iron-sulfur cluster assembly SufBD family.

The polypeptide is Iron-sulfur cluster assembly SufBD family protein PH1385 (Pyrococcus horikoshii (strain ATCC 700860 / DSM 12428 / JCM 9974 / NBRC 100139 / OT-3)).